Reading from the N-terminus, the 73-residue chain is Large ribosomal subunit protein bL31 (73 aa).

Residues Cys16, Cys18, Cys38, and Cys41 each contribute to the Zn(2+) site.

It belongs to the bacterial ribosomal protein bL31 family. Type A subfamily. Part of the 50S ribosomal subunit. Zn(2+) serves as cofactor.

Its function is as follows. Binds the 23S rRNA. The chain is Large ribosomal subunit protein bL31 from Streptomyces avermitilis (strain ATCC 31267 / DSM 46492 / JCM 5070 / NBRC 14893 / NCIMB 12804 / NRRL 8165 / MA-4680).